A 114-amino-acid chain; its full sequence is uncharacterized protein (114 aa).

A run of 2 helical transmembrane segments spans residues 14–34 (VMSA…CFLL) and 75–95 (VIII…HPVA).

It is found in the membrane. This is an uncharacterized protein from Homo sapiens (Human).